The chain runs to 405 residues: Pleckstrin homology-like domain family A member 1 (405 aa).

Composition is skewed to basic and acidic residues over residues 1 to 11 (MRRTPAAERLS) and 54 to 63 (RSPEDGREQP). Disordered regions lie at residues 1-67 (MRRT…AHGS), 189-217 (QLQQQQQQQQPGQGTAEPSQPSGPTVASL), and 293-405 (QQHL…SNSA). The 125-residue stretch at 153-277 (ALKEGVLEKR…AEITLQMVQY (125 aa)) folds into the PH domain. The segment covering 189-202 (QLQQQQQQQQPGQG) has biased composition (low complexity). A compositionally biased stretch (polar residues) spans 204 to 213 (AEPSQPSGPT). The span at 294–309 (QHLVQQQPPQTQQIQP) shows a compositional bias: low complexity. The segment at 309-344 (PQPQPQIQPQPQPQIQPQPQPQPQPQPQPQPQPQPQ) is 16 X 2 AA repeats of P-Q. Residues 310–342 (QPQPQIQPQPQPQIQPQPQPQPQPQPQPQPQPQ) show a composition bias toward pro residues. Residues 350–376 (PHPHPHPYSHPHQHPHPHPHPHPHPHP) are compositionally biased toward basic residues. The tract at residues 354–377 (PHPYSHPHQHPHPHPHPHPHPHPH) is 11 X 2 AA repeats of P-H. A compositionally biased stretch (low complexity) spans 378-389 (PYQLQHAHQPLH).

In terms of assembly, interacts with RPL14, EIF3S7 and PABPC4. Widely expressed with very high levels in adult liver and high levels in adult lung. According to PubMed:10428057 expressed at low levels in liver. Expressed at increased levels in atherosclerotic lesions observed in hyperhomocysteinema.

It localises to the cytoplasm. It is found in the cytoplasmic vesicle. Its subcellular location is the nucleus. The protein localises to the nucleolus. Its function is as follows. Seems to be involved in regulation of apoptosis. May be involved in detachment-mediated programmed cell death. May mediate apoptosis during neuronal development. May be involved in regulation of anti-apoptotic effects of IGF1. Required for TCR-induced apoptosis and expression of TNFRSF6/FAS in a T-cell hybridoma cell line. May be involved in translational regulation. In Mus musculus (Mouse), this protein is Pleckstrin homology-like domain family A member 1 (Phlda1).